The primary structure comprises 49 residues: Large ribosomal subunit protein bL33 (49 aa).

Belongs to the bacterial ribosomal protein bL33 family.

This Nitratidesulfovibrio vulgaris (strain ATCC 29579 / DSM 644 / CCUG 34227 / NCIMB 8303 / VKM B-1760 / Hildenborough) (Desulfovibrio vulgaris) protein is Large ribosomal subunit protein bL33.